A 483-amino-acid polypeptide reads, in one-letter code: Aspartyl/glutamyl-tRNA(Asn/Gln) amidotransferase subunit B (483 aa).

This sequence belongs to the GatB/GatE family. GatB subfamily. Heterotrimer of A, B and C subunits.

It carries out the reaction L-glutamyl-tRNA(Gln) + L-glutamine + ATP + H2O = L-glutaminyl-tRNA(Gln) + L-glutamate + ADP + phosphate + H(+). The catalysed reaction is L-aspartyl-tRNA(Asn) + L-glutamine + ATP + H2O = L-asparaginyl-tRNA(Asn) + L-glutamate + ADP + phosphate + 2 H(+). In terms of biological role, allows the formation of correctly charged Asn-tRNA(Asn) or Gln-tRNA(Gln) through the transamidation of misacylated Asp-tRNA(Asn) or Glu-tRNA(Gln) in organisms which lack either or both of asparaginyl-tRNA or glutaminyl-tRNA synthetases. The reaction takes place in the presence of glutamine and ATP through an activated phospho-Asp-tRNA(Asn) or phospho-Glu-tRNA(Gln). This chain is Aspartyl/glutamyl-tRNA(Asn/Gln) amidotransferase subunit B, found in Granulibacter bethesdensis (strain ATCC BAA-1260 / CGDNIH1).